Reading from the N-terminus, the 1120-residue chain is Transcription-repair-coupling factor (1120 aa).

The Helicase ATP-binding domain occupies 591–756; it reads DLTNGMLMDR…LTGLKELSII (166 aa). Residue 604-611 coordinates ATP; that stretch reads GDVGFGKT. The DEEQ box signature appears at 709–712; the sequence is DEEQ. The Helicase C-terminal domain maps to 777-933; it reads IIRDALLREH…TIASHDADLR (157 aa).

In the N-terminal section; belongs to the UvrB family. This sequence in the C-terminal section; belongs to the helicase family. RecG subfamily.

It localises to the cytoplasm. In terms of biological role, couples transcription and DNA repair by recognizing RNA polymerase (RNAP) stalled at DNA lesions. Mediates ATP-dependent release of RNAP and its truncated transcript from the DNA, and recruitment of nucleotide excision repair machinery to the damaged site. This Rickettsia typhi (strain ATCC VR-144 / Wilmington) protein is Transcription-repair-coupling factor.